A 277-amino-acid chain; its full sequence is 4-hydroxy-tetrahydrodipicolinate reductase (277 aa).

NAD(+)-binding positions include 11–16 (GALGRM) and 110–112 (GTT). The active-site Proton donor/acceptor is the H166. H167 contacts (S)-2,3,4,5-tetrahydrodipicolinate. The active-site Proton donor is the K170. 176-177 (GT) serves as a coordination point for (S)-2,3,4,5-tetrahydrodipicolinate.

Belongs to the DapB family.

The protein localises to the cytoplasm. It catalyses the reaction (S)-2,3,4,5-tetrahydrodipicolinate + NAD(+) + H2O = (2S,4S)-4-hydroxy-2,3,4,5-tetrahydrodipicolinate + NADH + H(+). It carries out the reaction (S)-2,3,4,5-tetrahydrodipicolinate + NADP(+) + H2O = (2S,4S)-4-hydroxy-2,3,4,5-tetrahydrodipicolinate + NADPH + H(+). It functions in the pathway amino-acid biosynthesis; L-lysine biosynthesis via DAP pathway; (S)-tetrahydrodipicolinate from L-aspartate: step 4/4. Its function is as follows. Catalyzes the conversion of 4-hydroxy-tetrahydrodipicolinate (HTPA) to tetrahydrodipicolinate. The chain is 4-hydroxy-tetrahydrodipicolinate reductase from Synechococcus sp. (strain CC9605).